We begin with the raw amino-acid sequence, 124 residues long: Large ribosomal subunit protein bL17 (124 aa).

The protein belongs to the bacterial ribosomal protein bL17 family. As to quaternary structure, part of the 50S ribosomal subunit. Contacts protein L32.

The sequence is that of Large ribosomal subunit protein bL17 from Persephonella marina (strain DSM 14350 / EX-H1).